A 214-amino-acid chain; its full sequence is CRISPR-associated protein Cas5 (214 aa).

It belongs to the CRISPR-associated protein Cas5 family.

Functionally, CRISPR (clustered regularly interspaced short palindromic repeat) is an adaptive immune system that provides protection against mobile genetic elements (viruses, transposable elements and conjugative plasmids). CRISPR clusters contain spacers, sequences complementary to antecedent mobile elements, and target invading nucleic acids. CRISPR clusters are transcribed and processed into CRISPR RNA (crRNA). In terms of biological role, has a role in fruiting body development, sporulation and aggregation. The sequence is that of CRISPR-associated protein Cas5 (devS) from Myxococcus xanthus (strain DK1622).